Reading from the N-terminus, the 156-residue chain is Small ribosomal subunit protein uS7 (156 aa).

The protein belongs to the universal ribosomal protein uS7 family. As to quaternary structure, part of the 30S ribosomal subunit. Contacts proteins S9 and S11.

Functionally, one of the primary rRNA binding proteins, it binds directly to 16S rRNA where it nucleates assembly of the head domain of the 30S subunit. Is located at the subunit interface close to the decoding center, probably blocks exit of the E-site tRNA. This is Small ribosomal subunit protein uS7 from Desulfovibrio desulfuricans (strain ATCC 27774 / DSM 6949 / MB).